The primary structure comprises 445 residues: Ktr system potassium uptake protein B (445 aa).

Helical transmembrane passes span 19 to 39, 46 to 66, 79 to 99, 127 to 147, 161 to 181, 196 to 216, 230 to 250, 286 to 306, 313 to 333, 351 to 371, 377 to 397, and 408 to 428; these read VLAI…MLPI, SWID…LAVV, VIMG…VLIV, IGLV…AALI, GLFA…FSLW, LVIT…FDVM, LMLT…FILE, FGSM…IGAG, GIKL…LRGK, ALAV…ALTI, FLQI…TMGL, and IIIV…FSFA.

This sequence belongs to the TrkH potassium transport family. Ktr (TC 2.A.38.4) subfamily. As to quaternary structure, homodimer. Part of the KtrAB complex formed by an octameric catalytic ring of KtrA and a membrane associated dimer of KtrB forming a potassium channel.

The protein localises to the cell membrane. Integral membrane subunit of the KtrAB potassium uptake transporter. The 2 major potassium transporter complexes KtrAB and KtrCD confer resistance to both suddenly imposed and prolonged osmotic stress. The protein is Ktr system potassium uptake protein B (ktrB) of Bacillus subtilis (strain 168).